A 278-amino-acid polypeptide reads, in one-letter code: MAKEVWRFIDSGYCPPAFNMALDEALLDWHSEGKIPPTVRFYGWNPPTLSIGYFQKVEKEIDLEAVKRHGLGFVRRPTGGRGVLHDKELTYSVIVSESHPAMPKTVTEAYRVISQGILEGFRYLGLDAYFAVPKTEEEKADLRSPRSAVCFDAPSWYELVVEGRKIAGSAQTRQKGVILQHGSILLDLDEELLFSLFKYPNERVKERLQRDFKKKAVAINELTSRTVTIEEAKEAFYKGFEKGLNIVLEPYTLTAEERAYVEELARAKYESDEWNFKR.

One can recognise a BPL/LPL catalytic domain in the interval 33 to 248 (GKIPPTVRFY…GFEKGLNIVL (216 aa)). Cys150 (acyl-thioester intermediate) is an active-site residue.

It belongs to the octanoyltransferase LipM family. As to quaternary structure, monomer.

The catalysed reaction is octanoyl-[ACP] + L-lysyl-[protein] = N(6)-octanoyl-L-lysyl-[protein] + holo-[ACP] + H(+). Its pathway is protein modification; protein lipoylation via endogenous pathway; protein N(6)-(lipoyl)lysine from octanoyl-[acyl-carrier-protein]. In terms of biological role, catalyzes the transfer of endogenously produced octanoic acid from octanoyl-acyl-carrier-protein onto the lipoyl domain of GcvH, an intermediate carrier during protein lipoylation. In Geobacillus kaustophilus (strain HTA426), this protein is Octanoyltransferase LipM.